The following is a 207-amino-acid chain: 8-oxoguanine DNA glycosylase/AP lyase (207 aa).

Residues lysine 129 and aspartate 147 contribute to the active site.

Belongs to the type-2 OGG1 family.

It carries out the reaction 2'-deoxyribonucleotide-(2'-deoxyribose 5'-phosphate)-2'-deoxyribonucleotide-DNA = a 3'-end 2'-deoxyribonucleotide-(2,3-dehydro-2,3-deoxyribose 5'-phosphate)-DNA + a 5'-end 5'-phospho-2'-deoxyribonucleoside-DNA + H(+). Functionally, catalyzes the excision of an oxidatively damaged form of guanine (7,8-dihydro-8-oxoguanine = 8-oxoG) from DNA. Also cleaves the DNA backbone at apurinic/apyrimidinic sites (AP sites). Has little specificity for the base opposite oxoG. The sequence is that of 8-oxoguanine DNA glycosylase/AP lyase from Methanocaldococcus jannaschii (strain ATCC 43067 / DSM 2661 / JAL-1 / JCM 10045 / NBRC 100440) (Methanococcus jannaschii).